A 400-amino-acid polypeptide reads, in one-letter code: uncharacterized protein (400 aa).

Residues M1–A23 form the signal peptide.

This is an uncharacterized protein from Archaeoglobus fulgidus (strain ATCC 49558 / DSM 4304 / JCM 9628 / NBRC 100126 / VC-16).